We begin with the raw amino-acid sequence, 427 residues long: UPF0597 protein CPF_0803 (427 aa).

The protein belongs to the UPF0597 family.

The sequence is that of UPF0597 protein CPF_0803 from Clostridium perfringens (strain ATCC 13124 / DSM 756 / JCM 1290 / NCIMB 6125 / NCTC 8237 / Type A).